The chain runs to 266 residues: NADP-dependent mannitol dehydrogenase (266 aa).

Positions 107 and 140 each coordinate NADP(+). Residue Ser159 is the Proton donor of the active site. Residues Tyr174, Lys178, Ile206, and Thr208 each contribute to the NADP(+) site. Tyr174 acts as the Proton acceptor in catalysis. Catalysis depends on Lys178, which acts as the Lowers pKa of active site Tyr.

It belongs to the short-chain dehydrogenases/reductases (SDR) family. In terms of assembly, homotetramer.

It carries out the reaction D-mannitol + NADP(+) = D-fructose + NADPH + H(+). Functionally, catalyzes the interconversion between D-mannitol and D-fructose. Plays a key role in liamocins biosynthesis by providing the mannitol moity that is linked to 3,5-dihydroxydecanoic acid (provided by the HR-PKS PKS1) via ester bond formation catalyzed by the esterase EST1. The chain is NADP-dependent mannitol dehydrogenase from Aureobasidium melanogenum (Aureobasidium pullulans var. melanogenum).